The primary structure comprises 282 residues: tRNA pseudouridine synthase A (282 aa).

The active-site Nucleophile is aspartate 53. Residue tyrosine 119 coordinates substrate.

It belongs to the tRNA pseudouridine synthase TruA family. In terms of assembly, homodimer.

The catalysed reaction is uridine(38/39/40) in tRNA = pseudouridine(38/39/40) in tRNA. Its function is as follows. Formation of pseudouridine at positions 38, 39 and 40 in the anticodon stem and loop of transfer RNAs. The protein is tRNA pseudouridine synthase A of Corynebacterium efficiens (strain DSM 44549 / YS-314 / AJ 12310 / JCM 11189 / NBRC 100395).